Reading from the N-terminus, the 445-residue chain is tRNA-2-methylthio-N(6)-dimethylallyladenosine synthase (445 aa).

The MTTase N-terminal domain occupies 3-124 (KKLYIKTYGC…LPELISKVVR (122 aa)). The [4Fe-4S] cluster site is built by Cys12, Cys48, Cys87, Cys162, Cys166, and Cys169. Residues 148 to 380 (YPQGASSFIS…QQELATQQLA (233 aa)) enclose the Radical SAM core domain. Residues 383–445 (QSCVGSTMRV…ALNSLTGEIL (63 aa)) enclose the TRAM domain.

Belongs to the methylthiotransferase family. MiaB subfamily. Monomer. Requires [4Fe-4S] cluster as cofactor.

It is found in the cytoplasm. The catalysed reaction is N(6)-dimethylallyladenosine(37) in tRNA + (sulfur carrier)-SH + AH2 + 2 S-adenosyl-L-methionine = 2-methylsulfanyl-N(6)-dimethylallyladenosine(37) in tRNA + (sulfur carrier)-H + 5'-deoxyadenosine + L-methionine + A + S-adenosyl-L-homocysteine + 2 H(+). Catalyzes the methylthiolation of N6-(dimethylallyl)adenosine (i(6)A), leading to the formation of 2-methylthio-N6-(dimethylallyl)adenosine (ms(2)i(6)A) at position 37 in tRNAs that read codons beginning with uridine. The sequence is that of tRNA-2-methylthio-N(6)-dimethylallyladenosine synthase from Rickettsia prowazekii (strain Madrid E).